A 232-amino-acid chain; its full sequence is Rho-related GTP-binding protein Rho6 (232 aa).

GTP is bound by residues 23 to 28, 38 to 45, 67 to 71, 125 to 128, and 169 to 170; these read QCGKTA, YPETYVPT, DTSGS, CKTD, and AF. An Effector region motif is present at residues 42–50; it reads YVPTVFENY. Cysteine 229 bears the Cysteine methyl ester mark. Cysteine 229 carries S-geranylgeranyl cysteine lipidation. Residues 230-232 constitute a propeptide, removed in mature form; the sequence is SIM.

The protein belongs to the small GTPase superfamily. Rho family. In terms of assembly, binds GRB7 and PLXNB1. Interacts with UBXD5. Interacts with PLXNA2. As to expression, mostly expressed in brain and liver.

The protein localises to the cell membrane. The protein resides in the cytoplasm. It localises to the cytoskeleton. Lacks intrinsic GTPase activity. Has a low affinity for GDP, and constitutively binds GTP. Controls rearrangements of the actin cytoskeleton. Induces the Rac-dependent neuritic process formation in part by disruption of the cortical actin filaments. Causes the formation of many neuritic processes from the cell body with disruption of the cortical actin filaments. This Homo sapiens (Human) protein is Rho-related GTP-binding protein Rho6 (RND1).